Here is a 651-residue protein sequence, read N- to C-terminus: Acetyl-coenzyme A synthetase (651 aa).

CoA contacts are provided by residues 189–192 (RGGK), threonine 311, and asparagine 335. ATP contacts are provided by residues 387-389 (GEP), 411-416 (DTWWQT), aspartate 500, and arginine 515. Serine 523 lines the CoA pocket. Arginine 526 serves as a coordination point for ATP. Valine 537, histidine 539, and valine 542 together coordinate Mg(2+). CoA is bound at residue arginine 586. At lysine 611 the chain carries N6-acetyllysine.

This sequence belongs to the ATP-dependent AMP-binding enzyme family. Requires Mg(2+) as cofactor. Acetylated. Deacetylation by the SIR2-homolog deacetylase activates the enzyme.

It catalyses the reaction acetate + ATP + CoA = acetyl-CoA + AMP + diphosphate. Its function is as follows. Catalyzes the conversion of acetate into acetyl-CoA (AcCoA), an essential intermediate at the junction of anabolic and catabolic pathways. AcsA undergoes a two-step reaction. In the first half reaction, AcsA combines acetate with ATP to form acetyl-adenylate (AcAMP) intermediate. In the second half reaction, it can then transfer the acetyl group from AcAMP to the sulfhydryl group of CoA, forming the product AcCoA. This chain is Acetyl-coenzyme A synthetase, found in Brucella abortus (strain S19).